Reading from the N-terminus, the 215-residue chain is UPF0126 membrane protein DR_2368 (215 aa).

6 helical membrane-spanning segments follow: residues 15-35 (LHWL…LLGV), 39-59 (FDLF…GAIR), 75-95 (TYLW…ERLA), 101-121 (LSLF…LGAI), 123-143 (IGLG…GGGI), and 162-182 (LYAT…PHFT).

It belongs to the UPF0126 family.

The protein resides in the cell membrane. The polypeptide is UPF0126 membrane protein DR_2368 (Deinococcus radiodurans (strain ATCC 13939 / DSM 20539 / JCM 16871 / CCUG 27074 / LMG 4051 / NBRC 15346 / NCIMB 9279 / VKM B-1422 / R1)).